A 397-amino-acid chain; its full sequence is CCA-adding enzyme (397 aa).

G26 and R29 together coordinate ATP. CTP-binding residues include G26 and R29. Mg(2+) contacts are provided by D39 and D41. ATP contacts are provided by R110, D153, R156, R159, and R162. Positions 110, 153, 156, 159, and 162 each coordinate CTP.

It belongs to the tRNA nucleotidyltransferase/poly(A) polymerase family. Bacterial CCA-adding enzyme type 3 subfamily. In terms of assembly, homodimer. Mg(2+) is required as a cofactor.

The enzyme catalyses a tRNA precursor + 2 CTP + ATP = a tRNA with a 3' CCA end + 3 diphosphate. It carries out the reaction a tRNA with a 3' CCA end + 2 CTP + ATP = a tRNA with a 3' CCACCA end + 3 diphosphate. In terms of biological role, catalyzes the addition and repair of the essential 3'-terminal CCA sequence in tRNAs without using a nucleic acid template. Adds these three nucleotides in the order of C, C, and A to the tRNA nucleotide-73, using CTP and ATP as substrates and producing inorganic pyrophosphate. tRNA 3'-terminal CCA addition is required both for tRNA processing and repair. Also involved in tRNA surveillance by mediating tandem CCA addition to generate a CCACCA at the 3' terminus of unstable tRNAs. While stable tRNAs receive only 3'-terminal CCA, unstable tRNAs are marked with CCACCA and rapidly degraded. The protein is CCA-adding enzyme of Bacillus cereus (strain B4264).